Reading from the N-terminus, the 283-residue chain is Movement protein (283 aa).

Belongs to the tenuiviruses pc4 protein family.

Functionally, transports viral genome to neighboring plant cells directly through plasmosdesmata, without any budding. The movement protein allows efficient cell to cell propagation, by bypassing the host cell wall barrier. In Maize stripe virus (MStV), this protein is Movement protein.